Reading from the N-terminus, the 509-residue chain is Kelch repeat protein M-T9 (509 aa).

The BTB domain maps to 15-79 (SDVTVVAGDS…MYAGCDGLND (65 aa)). 5 Kelch repeats span residues 274-320 (VLYC…IVNG), 321-368 (YIYV…YRNE), 370-415 (WIVG…VYNN), 416-463 (RLYC…VYNK), and 465-509 (IYVL…NDEI).

The protein belongs to the poxviruses Kelch family.

This Myxoma virus (strain Lausanne) (MYXV) protein is Kelch repeat protein M-T9.